An 835-amino-acid polypeptide reads, in one-letter code: Serine/threonine-protein kinase TNNI3K (835 aa).

Residues 21–51 (SESYVITIERLEDDLQIKEKELTELRNIFGS) adopt a coiled-coil conformation. 10 ANK repeats span residues 66-96 (NGLS…RPSR), 100-129 (NGFT…DIQQ), 133-162 (GGLT…NVNI), 166-195 (VFFT…DVNV), 199-228 (VGDR…KADV), 234-263 (EDHV…EVQP), 269-298 (YGDT…TESL), 304-335 (FSET…NINH), 339-368 (DGHT…DMNL), and 381-410 (DEQT…PQDE). In terms of domain architecture, Protein kinase spans 463 to 723 (IEFHEIIGSG…EVVMKLEECL (261 aa)). Residues 469–477 (IGSGSFGKV) and Lys-490 each bind ATP. The Proton acceptor role is filled by Asp-588. Residues 732 to 746 (ASSNSSGSLSPSSSS) show a composition bias toward low complexity. The interval 732-751 (ASSNSSGSLSPSSSSDCLVN) is disordered.

This sequence belongs to the protein kinase superfamily. TKL Ser/Thr protein kinase family. MAP kinase kinase kinase subfamily. As to quaternary structure, interacts with TNNI3, ACTC1, ACTA1, MYBPC3, AIP, FABP3 and HADHB. It depends on Mg(2+) as a cofactor. Autophosphorylated. Highly expressed in both adult and fetal heart.

It localises to the nucleus. The protein localises to the cytoplasm. It carries out the reaction L-seryl-[protein] + ATP = O-phospho-L-seryl-[protein] + ADP + H(+). The catalysed reaction is L-threonyl-[protein] + ATP = O-phospho-L-threonyl-[protein] + ADP + H(+). May play a role in cardiac physiology. This chain is Serine/threonine-protein kinase TNNI3K, found in Homo sapiens (Human).